We begin with the raw amino-acid sequence, 513 residues long: Zinc finger CCCH-type with G patch domain-containing protein (513 aa).

The residue at position 1 (Met1) is an N-acetylmethionine. The interval 92-131 is disordered; sequence PVAPGAELETVPSRETGPGPTEPGQEEDDGEDEEGGAALS. Positions 115-126 are enriched in acidic residues; that stretch reads GQEEDDGEDEEG. A C3H1-type zinc finger spans residues 176 to 202; the sequence is KSLKPCPFFLEGKCRFQENCRFSHGQV. The interval 267–298 is disordered; the sequence is LPPLRTDPAGSSDSDGSDADDPSYARVVEPGA. Phosphoserine occurs at positions 278 and 355. Residues 315–361 form the G-patch domain; that stretch reads TRGIGSRLLAKMGYEFGKGLGRRADGRVEPVHAVVLPRGKSLDQCAE. 2 disordered regions span residues 367-394 and 493-513; these read TRAG…PPPR and QEAG…MTEF. The segment covering 497-513 has biased composition (basic and acidic residues); the sequence is LQREQRKADTHKKMTEF.

As to quaternary structure, interacts with CHD4/Mi-2; the interaction is direct.

The protein resides in the nucleus. Functionally, transcription repressor that specifically binds the 5'-GGAG[GA]A[GA]A-3' consensus sequence. Represses transcription by recruiting the chromatin multiprotein complex NuRD to target promoters. Negatively regulates expression of EGFR, a gene involved in cell proliferation, survival and migration. Its ability to repress genes of the EGFR pathway suggest it may act as a tumor suppressor. In Ovis aries (Sheep), this protein is Zinc finger CCCH-type with G patch domain-containing protein (ZGPAT).